Consider the following 580-residue polypeptide: Anaphase-promoting complex subunit 7 (580 aa).

TPR repeat units follow at residues 50 to 83, 107 to 140, 141 to 175, 253 to 286, 321 to 354, 356 to 388, 390 to 421, 422 to 456, 458 to 490, and 491 to 523; these read IISFSLFGDSLFGKNEFVRSLKYFKQSLDILFKV, YELKYKISLCYIKINRNNLAISYLESIPFSSRGL, DTHLTIARLYKDIGKEKSKECIISYKEVIKLCPLC, VLEKLALSYLYHDEPSIINTFNIFQKIRLLDPYY, AETWTSVALFYFLKENVEKSLENVDRAISIKESH, FAHSLKGEILLSLDEPREALPSLERAFQLSKNI, TARELVRCHLILNQMKEALVVAETINNLSPDY, SKTMALLGMVLANQPEEREEARKILTKALTLSPHC, DTVLTLSKLNVVEGRFQEAIDILNSQLEYQETD, and LMHTEIAGVYLTKDYHEDAMIHYNSALEINPQY. The segment at 539 to 580 is disordered; sequence GIDPDQELDQENDDDDQEEGEGENDQEENDDDDNDDDDEYIS. Residues 542-580 are compositionally biased toward acidic residues; the sequence is PDQELDQENDDDDQEEGEGENDQEENDDDDNDDDDEYIS.

Belongs to the APC7 family. As to quaternary structure, the APC/C is composed of at least 13 subunits that stay tightly associated throughout the cell cycle: anapc1, anapc2, anapc3, anapc4, anapc5, anapc6, anapc7, anapc8, anapc10, anapc11, cdc20, cdc26 and cdh1.

The protein localises to the nucleus. It functions in the pathway protein modification; protein ubiquitination. Its function is as follows. Component of the anaphase promoting complex/cyclosome (APC/C), a cell cycle-regulated E3 ubiquitin-protein ligase complex that controls progression through mitosis and the G1 phase of the cell cycle. The protein is Anaphase-promoting complex subunit 7 (anapc7) of Dictyostelium discoideum (Social amoeba).